We begin with the raw amino-acid sequence, 318 residues long: Tyrosine recombinase XerD (318 aa).

Residues 5-90 form the Core-binding (CB) domain; that stretch reads PSDAKLTGLF…AMRHLYRFLL (86 aa). In terms of domain architecture, Tyr recombinase spans 111–310; that stretch reads GLPKVLSIAD…VEERLKSLVR (200 aa). Catalysis depends on residues arginine 161, lysine 185, histidine 262, arginine 265, and histidine 288. Tyrosine 297 (O-(3'-phospho-DNA)-tyrosine intermediate) is an active-site residue.

It belongs to the 'phage' integrase family. XerD subfamily. As to quaternary structure, forms a cyclic heterotetrameric complex composed of two molecules of XerC and two molecules of XerD.

The protein localises to the cytoplasm. Its function is as follows. Site-specific tyrosine recombinase, which acts by catalyzing the cutting and rejoining of the recombining DNA molecules. The XerC-XerD complex is essential to convert dimers of the bacterial chromosome into monomers to permit their segregation at cell division. It also contributes to the segregational stability of plasmids. The protein is Tyrosine recombinase XerD of Bradyrhizobium diazoefficiens (strain JCM 10833 / BCRC 13528 / IAM 13628 / NBRC 14792 / USDA 110).